The sequence spans 363 residues: DNA replication and repair protein RecF (363 aa).

31 to 38 is an ATP binding site; it reads GANSSGKT.

Belongs to the RecF family.

Its subcellular location is the cytoplasm. Its function is as follows. The RecF protein is involved in DNA metabolism; it is required for DNA replication and normal SOS inducibility. RecF binds preferentially to single-stranded, linear DNA. It also seems to bind ATP. This chain is DNA replication and repair protein RecF, found in Nitrosococcus oceani (strain ATCC 19707 / BCRC 17464 / JCM 30415 / NCIMB 11848 / C-107).